The chain runs to 82 residues: Small ribosomal subunit protein bS16 (82 aa).

It belongs to the bacterial ribosomal protein bS16 family.

The sequence is that of Small ribosomal subunit protein bS16 from Clostridium botulinum (strain Okra / Type B1).